An 872-amino-acid chain; its full sequence is Alanine--tRNA ligase (872 aa).

Zn(2+) contacts are provided by His567, His571, Cys669, and His673.

The protein belongs to the class-II aminoacyl-tRNA synthetase family. The cofactor is Zn(2+).

The protein localises to the cytoplasm. The enzyme catalyses tRNA(Ala) + L-alanine + ATP = L-alanyl-tRNA(Ala) + AMP + diphosphate. Catalyzes the attachment of alanine to tRNA(Ala) in a two-step reaction: alanine is first activated by ATP to form Ala-AMP and then transferred to the acceptor end of tRNA(Ala). Also edits incorrectly charged Ser-tRNA(Ala) and Gly-tRNA(Ala) via its editing domain. The sequence is that of Alanine--tRNA ligase from Streptococcus thermophilus (strain ATCC BAA-491 / LMD-9).